Reading from the N-terminus, the 84-residue chain is Acid stress protein IbaG (84 aa).

It belongs to the BolA/IbaG family.

Involved in cell resistance against acid stress. This Escherichia coli O6:H1 (strain CFT073 / ATCC 700928 / UPEC) protein is Acid stress protein IbaG.